The following is a 932-amino-acid chain: Potassium voltage-gated channel subfamily KQT member 5 (932 aa).

Residues 1–125 lie on the Cytoplasmic side of the membrane; that stretch reads MPRHHAGGEE…YNVLERPRGW (125 aa). At Ser88 the chain carries Phosphoserine. Residues 126-146 traverse the membrane as a helical segment; it reads AFIYHAFVFLLVFGCLILSVF. Residues 147–156 lie on the Extracellular side of the membrane; sequence STIPEHTKLA. Residues 157 to 177 form a helical membrane-spanning segment; the sequence is SSCLLILEFVMIVVFGLEFII. Residues 178–200 lie on the Cytoplasmic side of the membrane; the sequence is RIWSAGCCCRYRGWQGRLRFARK. A helical transmembrane segment spans residues 201-221; it reads PFCVIDTIVLIASIAVVSAKT. Over 222 to 229 the chain is Extracellular; it reads QGNIFATS. The helical; Voltage-sensor transmembrane segment at 230-252 threads the bilayer; it reads ALRSLRFLQILRMVRMDRRGGTW. A 1,2-diacyl-sn-glycero-3-phospho-(1D-myo-inositol-4,5-bisphosphate) contacts are provided by Arg248 and Lys264. At 253-266 the chain is on the cytoplasmic side; sequence KLLGSVVYAHSKEL. Residues 267-287 traverse the membrane as a helical segment; it reads ITAWYIGFLVLIFSSFLVYLV. Topologically, residues 288–298 are extracellular; that stretch reads EKDANKEFSTY. An intramembrane region (pore-forming) is located at residues 299 to 319; the sequence is ADALWWGTITLTTIGYGDKTP. The Extracellular segment spans residues 320–325; sequence LTWLGR. The chain crosses the membrane as a helical span at residues 326-346; that stretch reads LLSAGFALLGISFFALPAGIL. The Cytoplasmic segment spans residues 347-932; the sequence is GSGFALKVQE…ALSLPHVKLK (586 aa). Lys361 is a binding site for a 1,2-diacyl-sn-glycero-3-phospho-(1D-myo-inositol-4,5-bisphosphate). An interaction with CALM region spans residues 370–378; that stretch reads AANLIQCVW. The disordered stretch occupies residues 404–465; sequence SPTKKEQGEA…GSPTKVQKSW (62 aa). Polar residues predominate over residues 431–440; that stretch reads RGQSIKSRQA. Phosphoserine is present on Ser447. Residues 521–528 form an interaction with CALM region; that stretch reads VIRAIRIM. The segment at 655-678 is disordered; sequence SDYQSPVDSKDLSGSAQNSGCLSR. Ser831 carries the phosphoserine modification. Acidic residues predominate over residues 876–885; that stretch reads VGPEETETDT. A disordered region spans residues 876–919; the sequence is VGPEETETDTFDAAPQPAREAAFASDSLRTGRSRSSQSICKAGE. The segment covering 888-899 has biased composition (low complexity); that stretch reads AAPQPAREAAFA. Polar residues predominate over residues 902-914; the sequence is SLRTGRSRSSQSI.

This sequence belongs to the potassium channel family. KQT (TC 1.A.1.15) subfamily. Kv7.5/KCNQ5 sub-subfamily. Homotetramer; forms a functional homotetrameric channel resulting in the expression of a small M-current. Heterotetramer with KCNQ3; forms heterotetrameric M-channel responsible for the native M-current. Heterotetramer with KCNQ1; forms a functional voltage-gated potassium channel. Interacts (via C-terminus) with calmodulin/CALM1; forms a heterooctameric structure (with 4:4 KCNQ1:CALM stoichiometry); the interaction is calcium-independent, constitutive and participates in the channel function. Strongly expressed in brain and skeletal muscle. In brain, expressed in cerebral cortex, occipital pole, frontal lobe and temporal lobe. Lower levels in hippocampus and putamen. Low to undetectable levels in medulla, cerebellum and thalamus.

The protein resides in the cell membrane. It carries out the reaction K(+)(in) = K(+)(out). With respect to regulation, phosphatidylinositol-4,5-bisphosphate (PIP2) is essential to activate KCNQ5 channel by inducing the coupling of the voltage-sensing domain (VSD) and the pore-forming domain (PD). Calcium suppresses KCNQ5 channel current through calcium-bound CALM C-terminus. Therefore CALM acts as calcium sensor that controls channel activity. Activated by niflumic acid and the anticonvulsant retigabine. Inhibited by barium, linopirdine, XE991 and tetraethylammonium (as homomer). Insensitive to tetraethylammonium in KCNQ3-KCNQ5 heteromers. In terms of biological role, pore-forming subunit of the voltage-gated potassium (Kv) channel broadly expressed in brain and involved in the regulation of neuronal excitability. Associates with KCNQ3/Kv7.3 pore-forming subunit to form a potassium channel which contributes to M-type current, a slowly activating and deactivating potassium conductance which plays a critical role in determining the subthreshold electrical excitability of neurons. Contributes, with other potassium channels, to the molecular diversity of a heterogeneous population of M-channels, varying in kinetic and pharmacological properties, which underlie this physiologically important current. Also forms a functional channel with KCNQ1/Kv7.1 subunit that may contribute to vasoconstriction and hypertension. Channel may be selectively permeable in vitro to other cations besides potassium, in decreasing order of affinity K(+) = Rb(+) &gt; Cs(+) &gt; Na(+). Similar to the native M-channel, KCNQ3-KCNQ5 potassium channel is suppressed by activation of the muscarinic acetylcholine receptor CHRM1. The chain is Potassium voltage-gated channel subfamily KQT member 5 from Homo sapiens (Human).